A 62-amino-acid polypeptide reads, in one-letter code: Small polypeptide DEVIL 17 (62 aa).

Positions 27–58 (RRNKGCLAMVKERRSRFYIARRCILMLLCWHK) are required for DVL/RTFL small polypeptide activity. Residues 39–56 (RRSRFYIARRCILMLLCW) traverse the membrane as a helical segment.

Belongs to the DVL/RTFL small polypeptides family.

Its subcellular location is the cell membrane. Functionally, small polypeptide acting as a regulatory molecule which coordinates cellular responses required for differentiation, growth and development, probably by restricting polar cell proliferation in lateral organs and coordinating socket cell recruitment and differentiation at trichome sites. This Arabidopsis thaliana (Mouse-ear cress) protein is Small polypeptide DEVIL 17.